Here is a 1671-residue protein sequence, read N- to C-terminus: Fatty acid synthase alpha subunit aflA (1671 aa).

Positions 40-60 (ITEEAPTEQPPLSTPPSLPQT) are disordered. Residues 47-58 (EQPPLSTPPSLP) are compositionally biased toward pro residues. Residues 75–153 (DVALSRVQIV…DANPTVQLGK (79 aa)) form the Carrier domain. S113 carries the post-translational modification O-(pantetheine 4'-phosphoryl)serine. The interval 492–729 (GKTFLVTGAG…AMLLTPDFVA (238 aa)) is ketoreductase (KR) domain. Residues 926 to 1428 (MEVLQEVAVE…QKGGQVVGVA (503 aa)) enclose the Ketosynthase family 3 (KS3) domain. C1113 functions as the For beta-ketoacyl synthase activity in the catalytic mechanism. The segment covering 1244 to 1270 (SMISVTSRPSSRSSTSSEVSDKSSLTS) has biased composition (low complexity). The tract at residues 1244 to 1288 (SMISVTSRPSSRSSTSSEVSDKSSLTSITSISNPAPRAQRARSTT) is disordered. Active-site for beta-ketoacyl synthase activity residues include H1313 and H1354. Residues 1497 to 1521 (PSTGQYRFRSDATPALDDDALPPPG) are disordered. D1552 contributes to the Mg(2+) binding site. Residues 1552-1554 (DLV), 1598-1608 (EAVFKCLQTHS), 1622-1625 (HGGN), and 1652-1654 (ISY) each bind acetyl-CoA. S1653 serves as a coordination point for Mg(2+).

It belongs to the thiolase-like superfamily. Fungal fatty acid synthetase subunit alpha family. As to quaternary structure, [Alpha(6)beta(6)] hexamers of two multifunctional subunits (alpha and beta). In terms of processing, 4'-phosphopantetheine is transferred from CoA to a specific serine of the acyl carrier domain by the C-terminal PPT domain. This modification is essential for activity because fatty acids are bound in thioester linkage to the sulfhydryl of the prosthetic group.

It carries out the reaction acetyl-CoA + n malonyl-CoA + 2n NADPH + 4n H(+) = a long-chain-acyl-CoA + n CoA + n CO2 + 2n NADP(+).. It catalyses the reaction a fatty acyl-[ACP] + malonyl-[ACP] + H(+) = a 3-oxoacyl-[ACP] + holo-[ACP] + CO2. The enzyme catalyses a (3R)-hydroxyacyl-[ACP] + NADP(+) = a 3-oxoacyl-[ACP] + NADPH + H(+). Its pathway is mycotoxin biosynthesis; aflatoxin biosynthesis. In terms of biological role, fatty acid synthase alpha subunit; part of the gene cluster that mediates the biosynthesis of aflatoxins, a group of polyketide-derived furanocoumarins, and part of the most toxic and carcinogenic compounds among the known mycotoxins. The four major aflatoxins produced by A.parasiticus are aflatoxin B1 (AFB1), aflatoxin B2 (AFB2), aflatoxin G1 (AFG1) and aflatoxin G2 (AFG2). Within the aflatoxin pathway, the fungal fatty acid synthase aflA/aflB provides the hexanoyl starter unit to the acyl-carrier protein (ACP) domain of the norsolorinic acid synthase to allow the first step of the pathway. The biosynthesis of aflatoxins begins with the norsolorinic acid synthase aflC that combines a hexanoyl starter unit produced by the fatty acid synthase aflA/aflB and 7 malonyl-CoA extender units to synthesize the precursor NOR. The second step is the conversion of NOR to averantin (AVN) and requires the norsolorinic acid ketoreductase aflD, which catalyzes the dehydration of norsolorinic acid to form (1'S)-averantin. The norsolorinic acid reductases aflE and aflF may also play a role in the conversion of NOR to AVN. The cytochrome P450 monooxygenase aflG then catalyzes the hydroxylation of AVN to 5'hydroxyaverantin (HAVN). The next step is performed by the 5'-hydroxyaverantin dehydrogenase aflH that transforms HAVN to 5'-oxoaverantin (OAVN) which is further converted to averufin (AVF) by aflK that plays a dual role in the pathway, as a 5'-oxoaverantin cyclase that mediates conversion of 5'-oxoaverantin, as well as a versicolorin B synthase in a later step in the pathway. The averufin oxidase aflI catalyzes the conversion of AVF to versiconal hemiacetal acetate (VHA). VHA is then the substrate for the versiconal hemiacetal acetate esterase aflJ to yield versiconal (VAL). Versicolorin B synthase aflK then converts VAL to versicolorin B (VERB) by closing the bisfuran ring of aflatoxin which is required for DNA-binding, thus giving to aflatoxin its activity as a mutagen. Then, the activity of the versicolorin B desaturase aflL leads to versicolorin A (VERA). A branch point starts from VERB since it can also be converted to dihydrodemethylsterigmatocystin (DMDHST), probably also by aflL, VERA being a precursor for aflatoxins B1 and G1, and DMDHST for aflatoxins B2 and G2. Next, the versicolorin reductase aflM and the cytochrome P450 monooxygenase aflN are involved in conversion of VERA to demethylsterigmatocystin (DMST). AflX and aflY seem also involved in this step, through probable aflX-mediated epoxide ring-opening step following versicolorin A oxidation and aflY-mediated Baeyer-Villiger oxidation required for the formation of the xanthone ring. The methyltransferase aflO then leads to the modification of DMST to sterigmatocystin (ST), and of DMDHST to dihydrosterigmatocystin (DHST). Both ST and DHST are then substrates of the O-methyltransferase aflP to yield O-methylsterigmatocystin (OMST) and dihydro-O-methylsterigmatocystin (DHOMST), respectively. Finally OMST is converted to aflatoxins B1 and G1, and DHOMST to aflatoxins B2 and G2, via the action of several enzymes including O-methylsterigmatocystin oxidoreductase aflQ, the cytochrome P450 monooxygenase aflU, but also the NADH-dependent flavin oxidoreductase nadA which is specifically required for the synthesis of AFG1. This Aspergillus parasiticus (strain ATCC 56775 / NRRL 5862 / SRRC 143 / SU-1) protein is Fatty acid synthase alpha subunit aflA.